We begin with the raw amino-acid sequence, 574 residues long: Interleukin-22 receptor subunit alpha-1 (574 aa).

Positions 1 to 15 are cleaved as a signal peptide; the sequence is MRTLLTILTVGSLAA. Residues 16 to 228 lie on the Extracellular side of the membrane; the sequence is HAPEDPSDLL…VKTLPDRTWT (213 aa). Fibronectin type-III domains lie at 17–124 and 141–221; these read APED…LKPP and PTPT…RVKT. The cysteines at positions 71 and 79 are disulfide-linked. Asparagine 80 and asparagine 172 each carry an N-linked (GlcNAc...) asparagine glycan. An intrachain disulfide couples cysteine 128 to cysteine 217. A helical membrane pass occupies residues 229–249; that stretch reads YSFSGAFLFSMGFLVAVLCYL. Residues 250 to 574 are Cytoplasmic-facing; sequence SYRYVTKPPA…GLALTVQWES (325 aa). 3 disordered regions span residues 388 to 440, 454 to 489, and 507 to 560; these read SSYA…AGSC, AMEESQEAKSLHQPLGICTDRTSDPNVLHSGEEGTP, and HPMS…TELD. A phosphoserine mark is found at serine 410 and serine 414.

This sequence belongs to the type II cytokine receptor family. As to quaternary structure, heterodimer with IL10RB and with IL20RB. IL22 binding to heterodimer is greater than binding to IL22RA1 alone. Interacts with FBXW12; the interaction promotes ubiquitination of IL22RA1. In terms of processing, ubiquitinated. In terms of tissue distribution, expressed in colon, liver, lung, pancreas and kidney. No expression in immune cells such as monocytes, T-cells, and NK-cells. Expressed in keratinocytes of normal skin as well as in psoriatic skin lesion. Detected in normal blood brain barrier endothelial cells as well as in multiple sclerosis lesions; Strongly expressed on central nervous system vessels within infiltrated multiple sclerosis lesions. Overexpressed in synovial fluid cells from rheumatoid arthritis and spondyloarthropathy patients.

It is found in the cell membrane. Its function is as follows. Component of the receptor for IL20, IL22 and IL24. Component of IL22 receptor formed by IL22RA1 and IL10RB enabling IL22 signaling via JAK/STAT pathways. IL22 also induces activation of MAPK1/MAPK3 and Akt kinases pathways. Component of one of the receptor for IL20 and IL24 formed by IL22RA1 and IL20RB also signaling through STATs activation. Mediates IL24 antiangiogenic activity as well as IL24 inhibitory effect on endothelial cell tube formation and differentiation. The polypeptide is Interleukin-22 receptor subunit alpha-1 (IL22RA1) (Homo sapiens (Human)).